A 312-amino-acid chain; its full sequence is E3 ubiquitin-protein ligase RNF126-B (312 aa).

Zn(2+) contacts are provided by C13, C16, C29, and C32. The segment at C13–C32 adopts a C4-type zinc-finger fold. Disordered stretches follow at residues P41–S63 and G96–G139. The segment covering S44–S55 has biased composition (low complexity). Residues E102 to S115 are compositionally biased toward basic and acidic residues. Residues P124 to A134 are compositionally biased toward basic residues. The RING-type zinc-finger motif lies at C228–R269. The disordered stretch occupies residues Q275–S312. Residues S290–S301 show a composition bias toward low complexity. A compositionally biased stretch (polar residues) spans P302–S312.

The protein resides in the cytoplasm. The protein localises to the nucleus. The catalysed reaction is S-ubiquitinyl-[E2 ubiquitin-conjugating enzyme]-L-cysteine + [acceptor protein]-L-lysine = [E2 ubiquitin-conjugating enzyme]-L-cysteine + N(6)-ubiquitinyl-[acceptor protein]-L-lysine.. Its pathway is protein modification; protein ubiquitination. In terms of biological role, E3 ubiquitin-protein ligase that mediates ubiquitination oF target proteins. Depending on the associated E2 ligase, mediates 'Lys-27'-, 'Lys-29'-, 'Lys-48'- and/or 'Lys-63'-linked polyubiquitination of substrates. Part of a BAG6-dependent quality control process ensuring that proteins of the secretory pathway that are mislocalized to the cytosol are degraded by the proteasome. Probably acts by providing the ubiquitin ligase activity associated with the BAG6 complex and be responsible for ubiquitination of the hydrophobic mislocalized proteins and their targeting to the proteasome. The sequence is that of E3 ubiquitin-protein ligase RNF126-B from Xenopus laevis (African clawed frog).